Here is a 228-residue protein sequence, read N- to C-terminus: Triosephosphate isomerase (228 aa).

9–11 is a binding site for substrate; the sequence is NFK. The active-site Electrophile is His93. The active-site Proton acceptor is Glu141. Residues Ile146, Gly181, and 202-203 contribute to the substrate site; that span reads AS.

This sequence belongs to the triosephosphate isomerase family. As to quaternary structure, homotetramer; dimer of dimers.

Its subcellular location is the cytoplasm. It catalyses the reaction D-glyceraldehyde 3-phosphate = dihydroxyacetone phosphate. It participates in carbohydrate biosynthesis; gluconeogenesis. Its pathway is carbohydrate degradation; glycolysis; D-glyceraldehyde 3-phosphate from glycerone phosphate: step 1/1. Functionally, involved in the gluconeogenesis. Catalyzes stereospecifically the conversion of dihydroxyacetone phosphate (DHAP) to D-glyceraldehyde-3-phosphate (G3P). The chain is Triosephosphate isomerase from Pyrobaculum calidifontis (strain DSM 21063 / JCM 11548 / VA1).